A 153-amino-acid polypeptide reads, in one-letter code: UPF0540 protein At1g62220 (153 aa).

A signal peptide spans 1 to 21 (MNATKFVVLLVISVLCAIVTA). Disordered stretches follow at residues 63 to 82 (SSAT…YENG) and 122 to 153 (ARAN…GKKD). Residues 122–132 (ARANGKVASAS) are compositionally biased toward low complexity. Basic residues predominate over residues 141–153 (KKGKGKKGKGKKD).

The protein belongs to the UPF0540 family.

The protein is UPF0540 protein At1g62220 of Arabidopsis thaliana (Mouse-ear cress).